Consider the following 81-residue polypeptide: Putative membrane protein insertion efficiency factor (81 aa).

The protein belongs to the UPF0161 family.

The protein localises to the cell inner membrane. Its function is as follows. Could be involved in insertion of integral membrane proteins into the membrane. The protein is Putative membrane protein insertion efficiency factor of Pseudomonas savastanoi pv. phaseolicola (strain 1448A / Race 6) (Pseudomonas syringae pv. phaseolicola (strain 1448A / Race 6)).